Here is a 109-residue protein sequence, read N- to C-terminus: Thioredoxin-like protein slr1139 (109 aa).

In terms of domain architecture, Thioredoxin spans 2-107 (SLLEITDAEF…LLELLKEELD (106 aa)). Residues Cys31 and Cys34 are joined by a disulfide bond.

This sequence belongs to the thioredoxin family.

The sequence is that of Thioredoxin-like protein slr1139 from Synechocystis sp. (strain ATCC 27184 / PCC 6803 / Kazusa).